Here is a 102-residue protein sequence, read N- to C-terminus: Large ribosomal subunit protein bL21 (102 aa).

It belongs to the bacterial ribosomal protein bL21 family. Part of the 50S ribosomal subunit. Contacts protein L20.

In terms of biological role, this protein binds to 23S rRNA in the presence of protein L20. In Marinomonas sp. (strain MWYL1), this protein is Large ribosomal subunit protein bL21.